The primary structure comprises 346 residues: L-threonine dehydratase catabolic TdcB (346 aa).

59-60 (FT) is an AMP binding site. Lys-64 bears the N6-(pyridoxal phosphate)lysine mark. Residues Gln-94, 125 to 126 (GY), and Asn-321 each bind AMP.

The protein belongs to the serine/threonine dehydratase family. In terms of assembly, in the native structure, TdcB is in a dimeric form, whereas in the TdcB-AMP complex, it exists in a tetrameric form (dimer of dimers). Requires pyridoxal 5'-phosphate as cofactor.

The enzyme catalyses L-threonine = 2-oxobutanoate + NH4(+). It functions in the pathway amino-acid degradation; L-threonine degradation via propanoate pathway; propanoate from L-threonine: step 1/4. With respect to regulation, each protein molecule can bind up to four molecules of AMP, which act as an allosteric activator to the enzyme. Functionally, catalyzes the anaerobic formation of alpha-ketobutyrate and ammonia from threonine in a two-step reaction. The first step involved a dehydration of threonine and a production of enamine intermediates (aminocrotonate), which tautomerizes to its imine form (iminobutyrate). Both intermediates are unstable and short-lived. The second step is the nonenzymatic hydrolysis of the enamine/imine intermediates to form 2-ketobutyrate and free ammonia. In the low water environment of the cell, the second step is accelerated by RidA. The protein is L-threonine dehydratase catabolic TdcB (tdcB) of Staphylococcus aureus (strain Mu50 / ATCC 700699).